Here is a 131-residue protein sequence, read N- to C-terminus: Aspartate 1-decarboxylase (131 aa).

Catalysis depends on Ser-25, which acts as the Schiff-base intermediate with substrate; via pyruvic acid. A Pyruvic acid (Ser) modification is found at Ser-25. Residue Thr-57 coordinates substrate. Tyr-58 serves as the catalytic Proton donor. Gly-73 to Ala-75 provides a ligand contact to substrate.

The protein belongs to the PanD family. In terms of assembly, heterooctamer of four alpha and four beta subunits. The cofactor is pyruvate. In terms of processing, is synthesized initially as an inactive proenzyme, which is activated by self-cleavage at a specific serine bond to produce a beta-subunit with a hydroxyl group at its C-terminus and an alpha-subunit with a pyruvoyl group at its N-terminus.

The protein resides in the cytoplasm. It carries out the reaction L-aspartate + H(+) = beta-alanine + CO2. Its pathway is cofactor biosynthesis; (R)-pantothenate biosynthesis; beta-alanine from L-aspartate: step 1/1. In terms of biological role, catalyzes the pyruvoyl-dependent decarboxylation of aspartate to produce beta-alanine. The chain is Aspartate 1-decarboxylase from Leptothrix cholodnii (strain ATCC 51168 / LMG 8142 / SP-6) (Leptothrix discophora (strain SP-6)).